A 458-amino-acid polypeptide reads, in one-letter code: Alpha-1,3/1,6-mannosyltransferase ALG2 (458 aa).

N-linked (GlcNAc...) asparagine glycosylation is found at N57 and N169. Residues 438–458 (NISIIYVVSIIFAVLLKVFVF) form a helical membrane-spanning segment.

It belongs to the glycosyltransferase group 1 family.

It is found in the endoplasmic reticulum membrane. It carries out the reaction a beta-D-Man-(1-&gt;4)-beta-D-GlcNAc-(1-&gt;4)-alpha-D-GlcNAc-diphospho-di-trans,poly-cis-dolichol + GDP-alpha-D-mannose = an alpha-D-Man-(1-&gt;3)-beta-D-Man-(1-&gt;4)-beta-D-GlcNAc-(1-&gt;4)-alpha-D-GlcNAc-diphospho-di-trans,poly-cis-dolichol + GDP + H(+). The enzyme catalyses an alpha-D-Man-(1-&gt;3)-beta-D-Man-(1-&gt;4)-beta-D-GlcNAc-(1-&gt;4)-alpha-D-GlcNAc-diphospho-di-trans,poly-cis-dolichol + GDP-alpha-D-mannose = an alpha-D-Man-(1-&gt;3)-[alpha-D-Man-(1-&gt;6)]-beta-D-Man-(1-&gt;4)-beta-D-GlcNAc-(1-&gt;4)-alpha-D-GlcNAc-diphospho-di-trans,poly-cis-dolichol + GDP + H(+). The protein operates within protein modification; protein glycosylation. In terms of biological role, mannosylates Man(2)GlcNAc(2)-dolichol diphosphate and Man(1)GlcNAc(2)-dolichol diphosphate to form Man(3)GlcNAc(2)-dolichol diphosphate. The polypeptide is Alpha-1,3/1,6-mannosyltransferase ALG2 (ALG2) (Candida glabrata (strain ATCC 2001 / BCRC 20586 / JCM 3761 / NBRC 0622 / NRRL Y-65 / CBS 138) (Yeast)).